Consider the following 183-residue polypeptide: uncharacterized protein (183 aa).

This is an uncharacterized protein from Homo sapiens (Human).